The chain runs to 729 residues: Sorting nexin mvp1 (729 aa).

Disordered stretches follow at residues 1-43 (MSLF…SANL) and 177-340 (PLPK…EEPN). Residues 356–464 (EETVTVNLLP…VMFLTVPTEL (109 aa)) enclose the PX domain. Residues Arg-392, Ser-394, Lys-418, and Arg-431 each contribute to the a 1,2-diacyl-sn-glycero-3-phospho-(1D-myo-inositol-3-phosphate) site.

Belongs to the sorting nexin family.

The protein localises to the cytoplasm. The protein resides in the membrane. In terms of biological role, required for vacuolar protein sorting. This chain is Sorting nexin mvp1 (mvp1), found in Aspergillus fumigatus (strain ATCC MYA-4609 / CBS 101355 / FGSC A1100 / Af293) (Neosartorya fumigata).